A 386-amino-acid polypeptide reads, in one-letter code: Oxysterol-binding protein-related protein 4A (386 aa).

Belongs to the OSBP family. As to expression, expressed in roots, stems and flowers.

In terms of biological role, may be involved in the transport of sterols. This is Oxysterol-binding protein-related protein 4A (ORP4A) from Arabidopsis thaliana (Mouse-ear cress).